We begin with the raw amino-acid sequence, 310 residues long: Apolipoprotein E (310 aa).

A signal peptide spans 1–18; sequence MKVLWAALVVTLLAGCGA. 8 repeat units span residues 77–98, 99–120, 121–142, 143–164, 165–186, 187–208, 209–226, and 227–248. Residues 77–248 form an 8 X 22 AA approximate tandem repeats region; it reads ALMDDTMKEV…RLDEVREQVQ (172 aa). Residues 155–165 are LDL and other lipoprotein receptors binding; the sequence is HLRKMRKRLLR. 159 to 162 contacts heparin; the sequence is MRKR. The segment at 207–283 is lipid-binding and lipoprotein association; that stretch reads HTLVSKPLQE…SWFEPLVQDM (77 aa). 222–229 is a binding site for heparin; it reads AQRLRGRL. The interval 259–310 is homooligomerization; that stretch reads NQVRLQAEAFQGRLKSWFEPLVQDMQQKWAELVEKVQLAVGAVPTSVPSEKQ. Residues 271–283 are specificity for association with VLDL; that stretch reads RLKSWFEPLVQDM.

Belongs to the apolipoprotein A1/A4/E family. In terms of assembly, homotetramer. May interact with ABCA1; functionally associated with ABCA1 in the biogenesis of HDLs. May interact with APP/A4 amyloid-beta peptide; the interaction is extremely stable in vitro but its physiological significance is unclear. May interact with MAPT. May interact with MAP2. In the cerebrospinal fluid, interacts with secreted SORL1. Interacts with PMEL; this allows the loading of PMEL luminal fragment on ILVs to induce fibril nucleation. In terms of processing, APOE exists as multiple glycosylated and sialylated glycoforms within cells and in plasma. The extent of glycosylation and sialylation are tissue and context specific. Post-translationally, glycated in plasma VLDL. Phosphorylated by FAM20C in the extracellular medium.

The protein localises to the secreted. It localises to the extracellular space. Its subcellular location is the extracellular matrix. It is found in the extracellular vesicle. The protein resides in the endosome. The protein localises to the multivesicular body. Functionally, APOE is an apolipoprotein, a protein associating with lipid particles, that mainly functions in lipoprotein-mediated lipid transport between organs via the plasma and interstitial fluids. APOE is a core component of plasma lipoproteins and is involved in their production, conversion and clearance. Apolipoproteins are amphipathic molecules that interact both with lipids of the lipoprotein particle core and the aqueous environment of the plasma. As such, APOE associates with chylomicrons, chylomicron remnants, very low density lipoproteins (VLDL) and intermediate density lipoproteins (IDL) but shows a preferential binding to high-density lipoproteins (HDL). It also binds a wide range of cellular receptors including the LDL receptor/LDLR and the very low-density lipoprotein receptor/VLDLR that mediate the cellular uptake of the APOE-containing lipoprotein particles. Finally, APOE also has a heparin-binding activity and binds heparan-sulfate proteoglycans on the surface of cells, a property that supports the capture and the receptor-mediated uptake of APOE-containing lipoproteins by cells. This chain is Apolipoprotein E (APOE), found in Ceratotherium simum cottoni (Northern white rhinoceros).